Reading from the N-terminus, the 198-residue chain is ATP synthase subunit delta (198 aa).

It belongs to the ATPase delta chain family. In terms of assembly, F-type ATPases have 2 components, F(1) - the catalytic core - and F(0) - the membrane proton channel. F(1) has five subunits: alpha(3), beta(3), gamma(1), delta(1), epsilon(1). F(0) has three main subunits: a(1), b(2) and c(10-14). The alpha and beta chains form an alternating ring which encloses part of the gamma chain. F(1) is attached to F(0) by a central stalk formed by the gamma and epsilon chains, while a peripheral stalk is formed by the delta and b chains.

It is found in the cell inner membrane. In terms of biological role, f(1)F(0) ATP synthase produces ATP from ADP in the presence of a proton or sodium gradient. F-type ATPases consist of two structural domains, F(1) containing the extramembraneous catalytic core and F(0) containing the membrane proton channel, linked together by a central stalk and a peripheral stalk. During catalysis, ATP synthesis in the catalytic domain of F(1) is coupled via a rotary mechanism of the central stalk subunits to proton translocation. This protein is part of the stalk that links CF(0) to CF(1). It either transmits conformational changes from CF(0) to CF(1) or is implicated in proton conduction. This Gluconacetobacter diazotrophicus (strain ATCC 49037 / DSM 5601 / CCUG 37298 / CIP 103539 / LMG 7603 / PAl5) protein is ATP synthase subunit delta.